The chain runs to 323 residues: GDP-L-fucose synthase 1 (323 aa).

N-acetylalanine is present on Ala-2. Position 23-29 (23-29 (GHRGLVG)) interacts with NADP(+). Tyr-149 functions as the Proton donor/acceptor in the catalytic mechanism. Residues Lys-153, 176–179 (PTNL), and His-192 contribute to the NADP(+) site. 4 residues coordinate substrate: Arg-200, Trp-215, Arg-222, and Asp-282.

The protein belongs to the NAD(P)-dependent epimerase/dehydratase family. Fucose synthase subfamily. Binds and stabilizes MUR1. Homodimer. In terms of tissue distribution, highly expressed in roots and flowers, less abundant in leaves, stems and siliques.

The catalysed reaction is GDP-beta-L-fucose + NADP(+) = GDP-4-dehydro-alpha-D-rhamnose + NADPH + H(+). Its pathway is nucleotide-sugar biosynthesis; GDP-L-fucose biosynthesis via de novo pathway; GDP-L-fucose from GDP-alpha-D-mannose: step 2/2. Its function is as follows. Catalyzes the two-step NADP-dependent conversion of GDP-4-dehydro-6-deoxy-D-mannose to GDP-fucose, involving an epimerase and a reductase reaction. Not involved in the synthesis of GDP-L-galactose from GDP-D-mannose. This chain is GDP-L-fucose synthase 1 (GER1), found in Arabidopsis thaliana (Mouse-ear cress).